Reading from the N-terminus, the 197-residue chain is UPF0301 protein Adeh_3962 (197 aa).

It belongs to the UPF0301 (AlgH) family.

The sequence is that of UPF0301 protein Adeh_3962 from Anaeromyxobacter dehalogenans (strain 2CP-C).